The sequence spans 434 residues: Eukaryotic translation initiation factor 3 subunit E-2 (434 aa).

Positions 219 to 392 (FFNHPKGRDL…GHVVMGTQPL (174 aa)) constitute a PCI domain.

This sequence belongs to the eIF-3 subunit E family. Component of the eukaryotic translation initiation factor 3 (eIF-3) complex. The eIF-3 complex interacts with pix. Interacts with mxt.

The protein localises to the cytoplasm. Its function is as follows. Component of the eukaryotic translation initiation factor 3 (eIF-3) complex, which is involved in protein synthesis of a specialized repertoire of mRNAs and, together with other initiation factors, stimulates binding of mRNA and methionyl-tRNAi to the 40S ribosome. The eIF-3 complex specifically targets and initiates translation of a subset of mRNAs involved in cell proliferation. This is Eukaryotic translation initiation factor 3 subunit E-2 (eIF3-S6-2) from Drosophila willistoni (Fruit fly).